Here is a 164-residue protein sequence, read N- to C-terminus: Putative L,D-transpeptidase YkuD (164 aa).

The region spanning 2–45 is the LysM domain; that stretch reads LTYQVKQGDTLNSIAADFRISTAALLQANPSLQAGLTAGQSIVI. The 108-residue stretch at 56 to 163 folds into the L,D-TPase catalytic domain; that stretch reads YHIAVSIGAK…VPNGTRVTIN (108 aa). Catalysis depends on His123, which acts as the Proton donor/acceptor. The active-site Nucleophile is the Cys139.

The protein belongs to the YkuD family. In terms of assembly, monomer.

The protein localises to the spore wall. It functions in the pathway cell wall biogenesis; peptidoglycan biosynthesis. In terms of biological role, probable enzyme that may play an important role in cell wall biology. The polypeptide is Putative L,D-transpeptidase YkuD (ykuD) (Bacillus subtilis (strain 168)).